Reading from the N-terminus, the 241-residue chain is DnaA regulatory inactivator Hda (241 aa).

It belongs to the DnaA family. HdA subfamily. As to quaternary structure, the active form seems to be an ADP-bound monomer. Forms the RIDA complex (regulatory inactivation of DnaA) of ATP-DnaA, ADP-Hda and the DNA-loaded beta sliding clamp (dnaN).

Its function is as follows. Mediates the interaction of DNA replication initiator protein DnaA with DNA polymerase subunit beta sliding clamp (dnaN). Stimulates hydrolysis of ATP-DnaA to ADP-DnaA, rendering DnaA inactive for reinitiation, a process called regulatory inhibition of DnaA or RIDA. This Salmonella paratyphi A (strain ATCC 9150 / SARB42) protein is DnaA regulatory inactivator Hda.